The primary structure comprises 461 residues: Eukaryotic translation initiation factor 3 subunit M (461 aa).

Residues 42 to 61 (LLEPLRQQEQSDAEPDRKQR) form a disordered region. Residues 205 to 376 (DQELAQTHVV…SEFLVHRATY (172 aa)) form the PCI domain. The tract at residues 422-461 (AAEEAAQGKSGDKKGDRRQRRDQPQQSQPAPEAATAVAAE) is disordered. A compositionally biased stretch (basic and acidic residues) spans 431-444 (SGDKKGDRRQRRDQ). The segment covering 445–461 (PQQSQPAPEAATAVAAE) has biased composition (low complexity).

This sequence belongs to the eIF-3 subunit M family. In terms of assembly, component of the eukaryotic translation initiation factor 3 (eIF-3) complex.

Its subcellular location is the cytoplasm. Its function is as follows. Component of the eukaryotic translation initiation factor 3 (eIF-3) complex, which is involved in protein synthesis of a specialized repertoire of mRNAs and, together with other initiation factors, stimulates binding of mRNA and methionyl-tRNAi to the 40S ribosome. The eIF-3 complex specifically targets and initiates translation of a subset of mRNAs involved in cell proliferation. The polypeptide is Eukaryotic translation initiation factor 3 subunit M (Aspergillus terreus (strain NIH 2624 / FGSC A1156)).